A 423-amino-acid chain; its full sequence is 4-hydroxy-3-methylbut-2-en-1-yl diphosphate synthase (flavodoxin) (423 aa).

[4Fe-4S] cluster contacts are provided by C307, C310, C353, and E360.

The protein belongs to the IspG family. It depends on [4Fe-4S] cluster as a cofactor.

It carries out the reaction (2E)-4-hydroxy-3-methylbut-2-enyl diphosphate + oxidized [flavodoxin] + H2O + 2 H(+) = 2-C-methyl-D-erythritol 2,4-cyclic diphosphate + reduced [flavodoxin]. Its pathway is isoprenoid biosynthesis; isopentenyl diphosphate biosynthesis via DXP pathway; isopentenyl diphosphate from 1-deoxy-D-xylulose 5-phosphate: step 5/6. Its function is as follows. Converts 2C-methyl-D-erythritol 2,4-cyclodiphosphate (ME-2,4cPP) into 1-hydroxy-2-methyl-2-(E)-butenyl 4-diphosphate. The chain is 4-hydroxy-3-methylbut-2-en-1-yl diphosphate synthase (flavodoxin) from Brucella anthropi (strain ATCC 49188 / DSM 6882 / CCUG 24695 / JCM 21032 / LMG 3331 / NBRC 15819 / NCTC 12168 / Alc 37) (Ochrobactrum anthropi).